The sequence spans 294 residues: Probable HTH-type transcriptional regulator LrrA (294 aa).

The 58-residue stretch at 1–58 folds into the HTH lysR-type domain; it reads MNITQLQILAAVVETGNFSAAALQLDLSQSAVSRAIAALEDELGVVLLSRGRFGARPT. Residues 18 to 37 constitute a DNA-binding region (H-T-H motif); that stretch reads FSAAALQLDLSQSAVSRAIA.

Belongs to the LysR transcriptional regulatory family.

The protein is Probable HTH-type transcriptional regulator LrrA (lrrA) of Synechococcus elongatus (strain ATCC 33912 / PCC 7942 / FACHB-805) (Anacystis nidulans R2).